Reading from the N-terminus, the 464-residue chain is C-terminal processing peptidase, chloroplastic (464 aa).

The transit peptide at 1–32 directs the protein to the chloroplast; it reads MHSRTNCLQTSVRAPQPHFRPFTAVKTCRQRC. Residues 33–77 constitute a thylakoid transit peptide; sequence STTAAAAKRDQAQEQQPWIQVGLGLAAAATAVAVGLGAAALPAQA. The PDZ domain maps to 149–234; sequence LAALRRGTAG…SQVEVVLHAP (86 aa). Residues S372 and K397 each act as charge relay system in the active site.

Belongs to the peptidase S41A family. As to quaternary structure, monomer.

It is found in the plastid. It localises to the chloroplast thylakoid lumen. The catalysed reaction is The enzyme shows specific recognition of a C-terminal tripeptide, Xaa-Yaa-Zaa, in which Xaa is preferably Ala or Leu, Yaa is preferably Ala or Tyr, and Zaa is preferably Ala, but then cleaves at a variable distance from the C-terminus. A typical cleavage is -Ala-Ala-|-Arg-Ala-Ala-Lys-Glu-Asn-Tyr-Ala-Leu-Ala-Ala.. Not inhibited by antipain, 4-amidinophenylmethanesulfonyl fluoride, aprotinin, chymostatin, 3,4-dichloroisocoumarin, diisopropyl fluorophosphate, E64, EDTA, EGTA, iodoacetamide, leupeptin, pepstatin, o-phenanthroline, N-ethylmaleimide, phosphoramidon or phenylmethylsulfonyl fluoride. In terms of biological role, protease involved in the C-terminal processing of the chloroplastic D1 protein of photosystem II. This proteolytic processing is necessary to allow the light-driven assembly of the tetranuclear manganese cluster, which is responsible for photosynthetic water oxidation. The protein is C-terminal processing peptidase, chloroplastic (ctpA) of Tetradesmus obliquus (Green alga).